The following is a 209-amino-acid chain: dTTP/UTP pyrophosphatase (209 aa).

The Proton acceptor role is filled by Asp79.

Belongs to the Maf family. YhdE subfamily. Requires a divalent metal cation as cofactor.

It is found in the cytoplasm. It carries out the reaction dTTP + H2O = dTMP + diphosphate + H(+). The catalysed reaction is UTP + H2O = UMP + diphosphate + H(+). Its function is as follows. Nucleoside triphosphate pyrophosphatase that hydrolyzes dTTP and UTP. May have a dual role in cell division arrest and in preventing the incorporation of modified nucleotides into cellular nucleic acids. This chain is dTTP/UTP pyrophosphatase, found in Bradyrhizobium diazoefficiens (strain JCM 10833 / BCRC 13528 / IAM 13628 / NBRC 14792 / USDA 110).